The primary structure comprises 392 residues: MSFDAVVIGSGVIGLSIARELDNRGLKVAMVARDLAEDSLSVGFASPWAGCNWYSFAEGGTPAAEWDAITFSKLAKLAEDHPDLCEKIPFCSVWDLPKSDSESEPWFKDLVFEYKKLKSTPGQHLAGGKKFGYSFKSYVLHAPNYIRHLSSEIRARGIPIHRYRLSSIDEAYNLPGIGKVSLVVNASGLGAKSLIGVEDEKVYSGRGQTVLVRAPGFKACIMHTEGFYADLDESGREITPPPPAYIIPRPGPEGHVVLGGVYQKDNWSTLPDLKEAERILKDCYNLAPELAGPNGKSWKDIEIISHNVGLRPAREGEPRLEIEEREVGTGANGGNGYEVAPKFGCEGERRKVAVVHAYGIGSAGFQASLGMAEKASDLVEKYLSGRRTSAKL.

The FAD site is built by S10, I13, R33, D34, A45, S46, G50, and N52. Anthranilate is bound by residues F56, Y245, Y262, and R311. Residues Y245, Y262, and R311 each contribute to the (R)-lactate site. The FAD site is built by R311, G361, S362, G364, and Q366. An anthranilate-binding site is contributed by S362. Position 362 (S362) interacts with (R)-lactate. The Microbody targeting signal motif lies at 390–392 (AKL).

Belongs to the DAMOX/DASOX family. FAD is required as a cofactor.

Its subcellular location is the peroxisome matrix. It catalyses the reaction a D-alpha-amino acid + O2 + H2O = a 2-oxocarboxylate + H2O2 + NH4(+). The enzyme catalyses D-methionine + O2 + H2O = 4-methylsulfanyl-2-oxobutanoate + H2O2 + NH4(+). The catalysed reaction is D-serine + O2 + H2O = 3-hydroxypyruvate + H2O2 + NH4(+). It carries out the reaction D-histidine + O2 + H2O = 3-(imidazol-5-yl)pyruvate + H2O2 + NH4(+). It catalyses the reaction D-proline + O2 = 1-pyrroline-2-carboxylate + H2O2. The enzyme catalyses D-alanine + O2 + H2O = pyruvate + H2O2 + NH4(+). The catalysed reaction is D-leucine + O2 + H2O = 4-methyl-2-oxopentanoate + H2O2 + NH4(+). It carries out the reaction D-valine + O2 + H2O = 3-methyl-2-oxobutanoate + H2O2 + NH4(+). Its function is as follows. Catalyzes the oxidative deamination of D-amino acids with broad substrate specificity. Enables the organism to utilize D-amino acids as a source of nutrients. Enables the organism to utilize D-alanine, D-cysteine, D-histidine, D-leucine, D-methionine, D-phenylalanine, D-proline, D-serine, D-threonine, D-aspartate and D-valine as a nitrogen source and may also contribute to utlization of D-tryptophan, D-tyrosine and D-asparagine as a nitrogen source. Protects the organism from the toxicity of D-amino acids, including from D-alanine. May play a role in its interaction with the host. This chain is D-amino-acid oxidase 2, found in Cryptococcus deuterogattii (strain R265) (Cryptococcus gattii VGII (strain R265)).